The sequence spans 477 residues: MPPSDTQSPAANNAHEFSVSEISFALKKTVEETFGHVRVRGEITGYRGPHSSGHCYFGLKDDKARMDAVIWKGNFGKLRFKPEEGMEVIATGKLTTYPGSSKYQIVIDHLEPAGVGALMALLEERRKKLAAEGLFAAERKRALPFLPEVIGVVTSPTGAVIRDILHRLQDRFPRHVIVWPVRVQGETSAAEVAAAIRGFNAMEKGGKTPRPDLLIIARGGGSIEDLWSFNEEIVVRAAAESAIPLISAIGHETDTTLIDFASDRRAPTPTAAAEMAVPVRAELLADVRDKGSRLIRCEARAIESYRTQLGGLARGLPKLQDLVALPRQRFDTAADRLGRALIRAAEVKRARLSRVEGRLSDRPIRLRIANERKGLPQLLQRLTRAETRRVADLARSLDGSTKLLESYSYHGVLKRGYAVVRDETGKPIRAGAGQTAGARIEIEFAEDRLDAVVAPGGTVAPRKAPPKKPGGGQGSLL.

The disordered stretch occupies residues 456 to 477 (GGTVAPRKAPPKKPGGGQGSLL).

The protein belongs to the XseA family. As to quaternary structure, heterooligomer composed of large and small subunits.

It is found in the cytoplasm. It carries out the reaction Exonucleolytic cleavage in either 5'- to 3'- or 3'- to 5'-direction to yield nucleoside 5'-phosphates.. Bidirectionally degrades single-stranded DNA into large acid-insoluble oligonucleotides, which are then degraded further into small acid-soluble oligonucleotides. This chain is Exodeoxyribonuclease 7 large subunit, found in Parvibaculum lavamentivorans (strain DS-1 / DSM 13023 / NCIMB 13966).